Reading from the N-terminus, the 1691-residue chain is ADAMTS-like protein 3 (1691 aa).

The N-terminal stretch at 1 to 26 (MASWTSPWWVLIGMVFMHSPLPQTTA) is a signal peptide. The 50-residue stretch at 75-124 (DGNWDAWGDWSDCSRTCGGGASYSLRRCLTGRNCEGQNIRYKTCSNHDCP) folds into the TSP type-1 1 domain. 3 cysteine pairs are disulfide-bonded: C87–C118, C91–C123, and C102–C108. N-linked (GlcNAc...) asparagine glycosylation is present at N293. 3 consecutive TSP type-1 domains span residues 418–468 (PLPR…APKP), 478–535 (DCPK…IPCY), and 564–626 (EEPT…EACD). Cystine bridges form between C576/C620, C580/C625, and C591/C609. An N-linked (GlcNAc...) asparagine glycan is attached at N681. 3 TSP type-1 domains span residues 703-760 (CPPR…FDCP), 763-818 (WHIE…ARTD), and 819-881 (CPPH…PECS). N797 carries N-linked (GlcNAc...) asparagine glycosylation. 3 disulfide bridges follow: C831–C875, C835–C880, and C846–C863. The Ig-like C2-type 1 domain maps to 896–992 (PQILSVQRVY…IAGSAQETVV (97 aa)). N-linked (GlcNAc...) asparagine glycosylation is found at N915 and N927. C934 and C982 are oxidised to a cystine. A glycan (N-linked (GlcNAc...) asparagine) is linked at N1102. The interval 1146–1184 (PPAAQLRGETGSVSQSSHAKNSGKLTFKPKGPVLMRQSQ) is disordered. Residues 1156-1169 (GSVSQSSHAKNSGK) show a composition bias toward polar residues. Residues 1185 to 1279 (PPSISFNKTI…GSDVESSSVL (95 aa)) form the Ig-like C2-type 2 domain. N1191 is a glycosylation site (N-linked (GlcNAc...) asparagine). An intrachain disulfide couples C1215 to C1263. N1292, N1316, N1330, N1343, N1349, N1356, N1432, N1516, N1574, and N1591 each carry an N-linked (GlcNAc...) asparagine glycan. Positions 1296–1378 (PEHNHLSVVV…ATNALGKAVA (83 aa)) constitute an Ig-like C2-type 3 domain. Residues C1321 and C1367 are joined by a disulfide bond. TSP type-1 domains are found at residues 1424–1482 (QEPF…NIRD) and 1483–1545 (CPAR…HPCV). The 48-residue stretch at 1597 to 1644 (CDVCWHTGPWKPCTAACGRGFQSRKVDCIHTRSCKPVAKRHCVQKKKP) folds into the TSP type-1 10 domain. In terms of domain architecture, PLAC spans 1655-1691 (CDRDCTDTTHYCMFVKHLNLCSLDRYKQRCCQSCQEG).

Glycosylated. Can be O-fucosylated by POFUT2 on a serine or a threonine residue found within the consensus sequence C1-X(2)-(S/T)-C2-G of the TSP type-1 repeat domains where C1 and C2 are the first and second cysteine residue of the repeat, respectively. Fucosylated repeats can then be further glycosylated by the addition of a beta-1,3-glucose residue by the glucosyltransferase, B3GALTL. Fucosylation mediates the efficient secretion of ADAMTS family members. Can also be C-glycosylated with one or two mannose molecules on tryptophan residues within the consensus sequence W-X-X-W of the TPRs, and N-glycosylated. These other glycosylations can also facilitate secretion. Expressed in epithelial cells of the colon, fallopian tube, skin, breast, prostate, epididymis, liver, pancreatic islets and bile ducts, as well as by vascular endothelial cells, smooth muscle cells, fibroblasts, cortical and ganglionic neurons and cardiac myocytes. Also expressed by malignant epithelial cells in colon cancer, as well as breast, prostate, renal and skin tumors. Expression is significantly reduced in colon cancer compared to normal colon.

It is found in the secreted. The protein resides in the extracellular space. Its subcellular location is the extracellular matrix. The protein is ADAMTS-like protein 3 (ADAMTSL3) of Homo sapiens (Human).